The primary structure comprises 361 residues: Protein C42 (361 aa).

The interval leucine 32–glutamate 36 is LXCXE motif. The short motif at lysine 357–lysine 360 is the Nuclear localization signal element.

The protein belongs to the baculoviridae C42 protein family. As to quaternary structure, forms a complex with proteins E27 and p78/83. The interaction with p78/83 mediates nuclear translocation of P78/83. Interacts with protein Ac102. Interacts with IE0.

Its subcellular location is the host nucleus. The protein localises to the virion. Plays a role in host nuclear actin polymerization by recruiting p78/73 protein that is capable of activating an actin-related protein 2/3 complex to initiate nuclear actin polymerization. The chain is Protein C42 from Lepidoptera (butterflies and moths).